Consider the following 896-residue polypeptide: UPF0182 protein GM21_2279 (896 aa).

A run of 7 helical transmembrane segments spans residues 6-26 (MTFILVAIAVIFPFIGYLLSF), 46-66 (VYAQTGAGLIFGLLLFAFLQL), 99-119 (LVRPVGILISLVLAFLAGNWG), 158-180 (LLKSFAGFMVLAASVLSAAAYYV), 201-221 (LAVLVGLFGLVVAAGFYLESF), 245-265 (TLRILTFLTPVAGVVLALGIW), and 271-291 (LALGPPVVIVALYLVGVRVYP).

This sequence belongs to the UPF0182 family.

It is found in the cell membrane. This chain is UPF0182 protein GM21_2279, found in Geobacter sp. (strain M21).